Here is a 274-residue protein sequence, read N- to C-terminus: AQTVPYGIPLIKADKVQAQGYKGANVKVGIIDTGIAASHTDLKVVGGASFVSGESYNTDGNGHGTHVAGTVAALDNTTGVLGVAPNVSLYAIKVLNSSGSGTYSAIVSGIEWATQNGLDVINMSLGGPSGSTALKQAVDKAYASGIVVVAAAGNSGSSGSQNTIGYPAKYDSVIAVGAVDSNKNRASFSSVGAELEVMAPGVSVYSTYPSNTYTSLNGTSMASPHVAGAAALILSKYPTLSASQVRNRLSSTATNLGDSFYYGKGLINVEAAAQ.

Residue glutamine 2 participates in Ca(2+) binding. The Peptidase S8 domain occupies 5–273; sequence PYGIPLIKAD…KGLINVEAAA (269 aa). The active-site Charge relay system is aspartate 32. Residue aspartate 41 coordinates Ca(2+). Residue histidine 63 is the Charge relay system of the active site. Ca(2+) contacts are provided by leucine 74, asparagine 76, valine 80, alanine 168, tyrosine 170, and valine 173. The active-site Charge relay system is serine 220.

The protein belongs to the peptidase S8 family. It depends on Ca(2+) as a cofactor.

Its subcellular location is the secreted. The enzyme catalyses Hydrolysis of proteins with broad specificity for peptide bonds, and a preference for a large uncharged residue in P1. Hydrolyzes peptide amides.. Its function is as follows. Subtilisin is an extracellular alkaline serine protease, it catalyzes the hydrolysis of proteins and peptide amides. This is Subtilisin DY (apr) from Bacillus licheniformis.